The following is a 451-amino-acid chain: Phosphoglucosamine mutase (451 aa).

The Phosphoserine intermediate role is filled by serine 101. Mg(2+) is bound by residues serine 101, aspartate 240, aspartate 242, and aspartate 244. A Phosphoserine modification is found at serine 101.

It belongs to the phosphohexose mutase family. It depends on Mg(2+) as a cofactor. Post-translationally, activated by phosphorylation.

It carries out the reaction alpha-D-glucosamine 1-phosphate = D-glucosamine 6-phosphate. Functionally, catalyzes the conversion of glucosamine-6-phosphate to glucosamine-1-phosphate. The chain is Phosphoglucosamine mutase from Streptococcus pyogenes serotype M1.